Consider the following 179-residue polypeptide: Large ribosomal subunit protein uL6 (179 aa).

The protein belongs to the universal ribosomal protein uL6 family. In terms of assembly, part of the 50S ribosomal subunit.

Its function is as follows. This protein binds to the 23S rRNA, and is important in its secondary structure. It is located near the subunit interface in the base of the L7/L12 stalk, and near the tRNA binding site of the peptidyltransferase center. The protein is Large ribosomal subunit protein uL6 of Persephonella marina (strain DSM 14350 / EX-H1).